The following is a 254-amino-acid chain: 3-deoxy-manno-octulosonate cytidylyltransferase (254 aa).

It belongs to the KdsB family.

It is found in the cytoplasm. It catalyses the reaction 3-deoxy-alpha-D-manno-oct-2-ulosonate + CTP = CMP-3-deoxy-beta-D-manno-octulosonate + diphosphate. It participates in nucleotide-sugar biosynthesis; CMP-3-deoxy-D-manno-octulosonate biosynthesis; CMP-3-deoxy-D-manno-octulosonate from 3-deoxy-D-manno-octulosonate and CTP: step 1/1. The protein operates within bacterial outer membrane biogenesis; lipopolysaccharide biosynthesis. In terms of biological role, activates KDO (a required 8-carbon sugar) for incorporation into bacterial lipopolysaccharide in Gram-negative bacteria. This Pseudomonas fluorescens (strain SBW25) protein is 3-deoxy-manno-octulosonate cytidylyltransferase.